Here is a 2439-residue protein sequence, read N- to C-terminus: Protein roller-3 (2439 aa).

An N-terminal signal peptide occupies residues 1–26 (MLDFPRFSLFLFLLFSSFLFSSFVHA). The Extracellular segment spans residues 27–1851 (ATVFSSSLKT…EEEKGGILPY (1825 aa)). N-linked (GlcNAc...) asparagine glycans are attached at residues N64, N182, N334, N394, N496, N533, N657, N766, N868, N1003, N1036, N1090, and N1261. In terms of domain architecture, Fibronectin type-III 1 spans 618 to 720 (KPRIVAVSSI…STSNTALPDL (103 aa)). Fibronectin type-III domains follow at residues 1403 to 1503 (SKGI…TGFG), 1507 to 1628 (APRD…TLDV), 1629 to 1732 (PGTL…IQQA), and 1738 to 1843 (VPTA…EKEE). Residues N1567, N1636, N1677, and N1779 are each glycosylated (N-linked (GlcNAc...) asparagine). A helical transmembrane segment spans residues 1852 to 1872 (FLGISIILLLAAMILVGCFWL). The Cytoplasmic segment spans residues 1873-2439 (KSRRRQQMKK…GGTCRSVSQV (567 aa)). Residues 1928–2199 (VEIVRHISDC…ATILKIFETC (272 aa)) form the Protein kinase domain. ATP-binding positions include 1934-1942 (ISDCSYGSV) and K1963. Disordered regions lie at residues 2214–2277 (NEGS…RPAT), 2315–2348 (SQRP…NRTN), and 2412–2439 (HLRA…VSQV). Polar residues-rich tracts occupy residues 2216–2233 (GSDN…SSRE), 2334–2347 (ATSS…SNRT), and 2420–2439 (PPTR…VSQV).

Its subcellular location is the membrane. Its function is as follows. Involved in larval development and locomotion. This Caenorhabditis briggsae protein is Protein roller-3.